The chain runs to 316 residues: Alkaline ceramidase YPC1 (316 aa).

Topologically, residues 1–36 are lumenal; the sequence is MGIFRWNYPESSVPGVWGETTSTIDWCEENYVVSPY. The cysteines at positions 27 and 219 are disulfide-linked. The stretch at 37-57 is an intramembrane region; the sequence is IAEWSNTLTNSVFILSAIYTT. The Lumenal segment spans residues 58–68; the sequence is YSAYKNKLEKR. The stretch at 69 to 89 is an intramembrane region; sequence FLLIGFGYGLVGVGSWLFHMT. Residues 90-93 lie on the Lumenal side of the membrane; the sequence is LKYR. A helical transmembrane segment spans residues 94–114; the sequence is FQLLDELPMIYAMCIPTWSLV. Topologically, residues 115–135 are cytoplasmic; sequence CEAKEALLNGDNHKKVPLFEQ. The chain crosses the membrane as a helical span at residues 136-156; the sequence is IFIGVIIGLAVTTASILYVIY. The Lumenal portion of the chain corresponds to 157–160; sequence KNVD. Residues 161 to 181 lie within the membrane without spanning it; the sequence is IHQILFGVQIVVVAATAGSLT. At 182-195 the chain is on the lumenal side; it reads YRYVHDPLAKRNLK. An intramembrane segment occupies 196-216; sequence ASMALGAILFLSGYISWLLDI. Over 217 to 228 the chain is Lumenal; the sequence is HYCSFWVHVRRS. Residues 229–249 traverse the membrane as a helical segment; the sequence is ILALPLGVLLEPHGWWHILTG. Over 250-316 the chain is Cytoplasmic; that stretch reads MGIYFYIVSL…DQSIEVKKEK (67 aa).

It belongs to the alkaline ceramidase family.

Its subcellular location is the endoplasmic reticulum membrane. The catalysed reaction is N-hexanoyl-sphinganine + H2O = hexanoate + sphinganine. It catalyses the reaction sphinganine + hexadecanoate = N-hexadecanoylsphinganine + H2O. It carries out the reaction N-hexadecanoyl-(4R)-hydroxysphinganine + H2O = (4R)-hydroxysphinganine + hexadecanoate. The enzyme catalyses N-hexadecanoylsphing-4-enine + H2O = sphing-4-enine + hexadecanoate. The catalysed reaction is an N-acyl-(4R)-4-hydroxysphinganine + H2O = (4R)-hydroxysphinganine + a fatty acid. Alkaline ceramidase that hydrolyzes phytoceramide and also dihydroceramide into phytosphingosine or dihydrosphingosine. Prefers phytoceramide. Also has reverse activity as acyl-CoA-independent ceramide synthase, catalyzing synthesis of phytoceramide and dihydroceramide from palmitic acid and phytosphingosine or dihydrosphingosine. Is not responsible for the breakdown of unsaturated ceramide. Preferentially uses very long chain fatty acids (C-24 and C-26) in vivo compared to C-16 in vitro. The chain is Alkaline ceramidase YPC1 (YPC1) from Saccharomyces cerevisiae (strain ATCC 204508 / S288c) (Baker's yeast).